The following is a 147-amino-acid chain: UPF0178 protein VP2328 (147 aa).

Belongs to the UPF0178 family.

The polypeptide is UPF0178 protein VP2328 (Vibrio parahaemolyticus serotype O3:K6 (strain RIMD 2210633)).